The chain runs to 332 residues: Ribosomal RNA-processing protein 8 (332 aa).

Residues M1–D109 are disordered. Basic residues-rich tracts occupy residues K38 to A53 and K82 to Y94. Basic and acidic residues predominate over residues K95–D109. Residues H158, G193, D213, D225, M226, and C242 each contribute to the S-adenosyl-L-methionine site.

It belongs to the methyltransferase superfamily. RRP8 family.

It localises to the nucleus. Its subcellular location is the nucleolus. Its function is as follows. Probable methyltransferase required to silence rDNA. This is Ribosomal RNA-processing protein 8 (rrp-8) from Caenorhabditis briggsae.